The sequence spans 853 residues: DNA mismatch repair protein MutS (853 aa).

616–623 (GPNMGGKS) lines the ATP pocket.

Belongs to the DNA mismatch repair MutS family.

Functionally, this protein is involved in the repair of mismatches in DNA. It is possible that it carries out the mismatch recognition step. This protein has a weak ATPase activity. This is DNA mismatch repair protein MutS from Erwinia tasmaniensis (strain DSM 17950 / CFBP 7177 / CIP 109463 / NCPPB 4357 / Et1/99).